Reading from the N-terminus, the 54-residue chain is Large ribosomal subunit protein uL15 (54 aa).

Over residues 1–30 the composition is skewed to basic residues; the sequence is MPSRLRXTRKLRGHVSHGHGRIGKHRKHPG. The segment at 1–42 is disordered; it reads MPSRLRXTRKLRGHVSHGHGRIGKHRKHPGGRGNAGGMHHHR. His39 carries the post-translational modification (3S)-3-hydroxyhistidine. Lys47 carries the N6-acetyllysine modification.

Belongs to the universal ribosomal protein uL15 family. In terms of assembly, component of the large ribosomal subunit. Post-translationally, hydroxylated on His-39 by MINA.

It localises to the cytoplasm. Functionally, component of the large ribosomal subunit. The ribosome is a large ribonucleoprotein complex responsible for the synthesis of proteins in the cell. The protein is Large ribosomal subunit protein uL15 (RPL27A) of Sus scrofa (Pig).